The primary structure comprises 593 residues: Acetyl-coenzyme A transferase nodX (593 aa).

The tract at residues 572-593 (DEDEQGSGFRSGSGLGSGSIAD) is disordered. The segment covering 580–593 (FRSGSGLGSGSIAD) has biased composition (gly residues).

This sequence belongs to the CoA-transferase III family.

It participates in secondary metabolite biosynthesis. Acetyl-coenzyme A transferase; part of the gene cluster that mediates the biosynthesis of the indole diterpenes nodulisporic acids (NA). Nodulisporic acid A (NAA) and its chemically modified derivatives are of particular significance because of their highly potent insecticidal activity against blood-feeding arthropods and lack of observable adverse effects on mammals, in particular the tremogenicity associated with the paspaline-derived IDTs is not observed. The geranylgeranyl diphosphate (GGPP) synthase ggs1, localized outside of the cluster, is proposed to catalyze the first step in nodulisporic acid biosynthesis via conversion of farnesyl pyrophosphate and isopentyl pyrophosphate into geranylgeranyl pyrophosphate (GGPP). Condensation of indole-3-glycerol phosphate with GGPP by the prenyl transferase nodC then forms 3-geranylgeranylindole (3-GGI). Epoxidation by the FAD-dependent monooxygenase nodM leads to a single-epoxidized-GGI that is substrate of the terpene cyclase nodB for cyclization to yield emindole SB. The terminal methyl carbon, C28, of emindole SB is then oxidized by the cytochrome P450 monooxygenase nodW to produce nodulisporic acid F (NAF), the pentacyclic core of NAA. NAF is converted to nodulisporic acid E (NAE) via prenylation. This step is probably performed by one of the indole diterpene prenyltransferases nodD1 or nodD2. Several oxidation steps performed by the FAD-linked oxidoreductase nodO and one of the cytochrome P450 monooxygenase nodR, nodX or nodZ further convert NAE to nodulisporic acid D (NAD). NAD is substrate of cytochrome P450 monooxygenase nodJ to produce the precursor of nodulisporic acid C (NAC), converted to NAC by one of the indole diterpene prenyltransferases nodD1 or nodD2. The FAD-dependent monooxygenase nodY2 then oxidizes NAC to nodulisporic acid B (NAB). Finally NAB is converted to NAA by one of the cytochrome P450 monooxygenases nodR, nodX or nodZ. This Hypoxylon pulicicidum protein is Acetyl-coenzyme A transferase nodX.